Consider the following 577-residue polypeptide: Urease subunit alpha (577 aa).

The region spanning 136 to 577 (GAIDCHVHLI…LPMAQRYFLF (442 aa)) is the Urease domain. 3 residues coordinate Ni(2+): H141, H143, and K224. K224 is modified (N6-carboxylysine). H226 provides a ligand contact to substrate. Residues H253 and H279 each contribute to the Ni(2+) site. H327 functions as the Proton donor in the catalytic mechanism. D367 is a Ni(2+) binding site.

Belongs to the metallo-dependent hydrolases superfamily. Urease alpha subunit family. In terms of assembly, heterotrimer of UreA (gamma), UreB (beta) and UreC (alpha) subunits. Three heterotrimers associate to form the active enzyme. It depends on Ni cation as a cofactor. Carboxylation allows a single lysine to coordinate two nickel ions.

The protein localises to the cytoplasm. It catalyses the reaction urea + 2 H2O + H(+) = hydrogencarbonate + 2 NH4(+). It participates in nitrogen metabolism; urea degradation; CO(2) and NH(3) from urea (urease route): step 1/1. This is Urease subunit alpha from Mycobacterium marinum (strain ATCC BAA-535 / M).